A 323-amino-acid polypeptide reads, in one-letter code: Malate dehydrogenase (323 aa).

An NAD(+)-binding site is contributed by 11 to 17 (GAAGQIA). Residues Arg-92 and Arg-98 each coordinate substrate. Residues Asn-105, Gln-112, and 129–131 (VGN) each bind NAD(+). The substrate site is built by Asn-131 and Arg-162. His-187 (proton acceptor) is an active-site residue.

It belongs to the LDH/MDH superfamily. MDH type 2 family.

It catalyses the reaction (S)-malate + NAD(+) = oxaloacetate + NADH + H(+). In terms of biological role, catalyzes the reversible oxidation of malate to oxaloacetate. The chain is Malate dehydrogenase from Corynebacterium efficiens (strain DSM 44549 / YS-314 / AJ 12310 / JCM 11189 / NBRC 100395).